Consider the following 229-residue polypeptide: Flagellar L-ring protein (229 aa).

An N-terminal signal peptide occupies residues 1–25 (MKQVRLPSSATVRAACAVAVAALAG). C26 carries N-palmitoyl cysteine lipidation. C26 carries S-diacylglycerol cysteine lipidation.

It belongs to the FlgH family. As to quaternary structure, the basal body constitutes a major portion of the flagellar organelle and consists of four rings (L,P,S, and M) mounted on a central rod.

Its subcellular location is the cell outer membrane. It localises to the bacterial flagellum basal body. Assembles around the rod to form the L-ring and probably protects the motor/basal body from shearing forces during rotation. This chain is Flagellar L-ring protein, found in Burkholderia orbicola (strain AU 1054).